Here is a 113-residue protein sequence, read N- to C-terminus: Large ribosomal subunit protein uL18 (113 aa).

The protein belongs to the universal ribosomal protein uL18 family. In terms of assembly, part of the 50S ribosomal subunit; part of the 5S rRNA/L5/L18/L25 subcomplex. Contacts the 5S and 23S rRNAs.

Its function is as follows. This is one of the proteins that bind and probably mediate the attachment of the 5S RNA into the large ribosomal subunit, where it forms part of the central protuberance. This is Large ribosomal subunit protein uL18 from Phocaeicola vulgatus (strain ATCC 8482 / DSM 1447 / JCM 5826 / CCUG 4940 / NBRC 14291 / NCTC 11154) (Bacteroides vulgatus).